The sequence spans 90 residues: Cell division topological specificity factor (90 aa).

It belongs to the MinE family.

Functionally, prevents the cell division inhibition by proteins MinC and MinD at internal division sites while permitting inhibition at polar sites. This ensures cell division at the proper site by restricting the formation of a division septum at the midpoint of the long axis of the cell. This chain is Cell division topological specificity factor, found in Lachnoclostridium phytofermentans (strain ATCC 700394 / DSM 18823 / ISDg) (Clostridium phytofermentans).